A 278-amino-acid chain; its full sequence is Potassium/proton antiporter CemA (278 aa).

4 consecutive transmembrane segments (helical) span residues 60 to 80 (YLVL…SLVF), 163 to 183 (ILAF…IAVL), 201 to 221 (FLII…GWEV), and 239 to 259 (IFLF…YWIF).

It belongs to the CemA family.

The protein resides in the plastid. It localises to the chloroplast inner membrane. It catalyses the reaction K(+)(in) + H(+)(out) = K(+)(out) + H(+)(in). In terms of biological role, contributes to K(+)/H(+) antiport activity by supporting proton efflux to control proton extrusion and homeostasis in chloroplasts in a light-dependent manner to modulate photosynthesis. Prevents excessive induction of non-photochemical quenching (NPQ) under continuous-light conditions. Indirectly promotes efficient inorganic carbon uptake into chloroplasts. This is Potassium/proton antiporter CemA from Guillardia theta (Cryptophyte).